The sequence spans 1744 residues: Transcription initiation factor TFIID subunit 1 (1744 aa).

Disordered regions lie at residues 1–65, 248–275, 429–488, 1001–1024, 1071–1098, and 1186–1213; these read MNNT…EKNE, VSIRSGKPLNYRTPDDLPSTSSGPAPNS, PEDR…DNDP, QNQTLANTDPISTDDDSTDADSDN, TTNQVEKGEKKEEGEVTAEEKKSASQFG, and MKKNEEKAAHKVQKMTEKKVKPIKPPNP. Over residues 43-52 the composition is skewed to polar residues; sequence ACSSASNGGS. Residues 55-64 show a composition bias toward basic and acidic residues; sequence VKMEPKVEKN. The span at 429-439 shows a compositional bias: basic and acidic residues; that stretch reads PEDRRHDEGPD. A compositionally biased stretch (basic residues) spans 440-449; that stretch reads HHHHHHHHRK. Over residues 477-488 the composition is skewed to polar residues; that stretch reads ESTMAQFTDNDP. Residues 1012 to 1024 are compositionally biased toward acidic residues; that stretch reads STDDDSTDADSDN. 3 coiled-coil regions span residues 1019–1080, 1161–1204, and 1282–1314; these read DADS…KGEK, YAQM…TEKK, and NFAEIRKEQNREEKLKRKLAKMAEAAVRERQMA. Composition is skewed to basic and acidic residues over residues 1076–1093 and 1186–1205; these read EKGEKKEEGEVTAEEKKS and MKKNEEKAAHKVQKMTEKKV. Residues 1319–1344 show a composition bias toward gly residues; that stretch reads YGGGASSSGGAGGGGSGIGGSTGGGI. The interval 1319-1391 is disordered; it reads YGGGASSSGG…SKRRSSMMPE (73 aa). The span at 1354–1363 shows a compositional bias: polar residues; sequence SQISGTSSFL. Residues 1372–1381 are compositionally biased toward low complexity; it reads GGNRNSSVSG. Positions 1379–1386 match the Nuclear localization signal motif; it reads VSGSKRRS. Bromo domains are found at residues 1404-1512 and 1537-1634; these read RARA…MIER and YLLG…VKDQ. Positions 1666 to 1694 are enriched in acidic residues; sequence DHMDEMEDHPTEEEEEDDDDEIMDDDMDI. 2 disordered regions span residues 1666 to 1702 and 1714 to 1744; these read DHMDEMEDHPTEEEEEDDDDEIMDDDMDIDATGYSYD and NDLAMSDSDEDERAEDVKRPANGDDNLLDSF.

This sequence belongs to the TAF1 family. As to quaternary structure, component of the TFIID basal transcription factor complex, composed of TATA-box-binding protein tbp-1, and a number of TBP-associated factors (TAFs).

The protein localises to the nucleus. The TFIID basal transcription factor complex plays a major role in the initiation of RNA polymerase II (Pol II)-dependent transcription. TFIID recognizes and binds promoters via its subunit tbp-1, a TATA-box-binding protein, and promotes assembly of the pre-initiation complex (PIC). The TFIID complex consists of tbp-1 and TBP-associated factors (TAFs), including taf-1. May regulate RNA polymerase II activity and thereby may control transcription initiation by RNA polymerase II. Required for early embryonic development. Essential for embryonic transcription of several genes. This chain is Transcription initiation factor TFIID subunit 1, found in Caenorhabditis elegans.